The sequence spans 221 residues: Flavin-dependent thymidylate synthase (221 aa).

One can recognise a ThyX domain in the interval 9–209; the sequence is GFVKLLDHMG…PWTYESFIRY (201 aa). FAD is bound by residues serine 55, 78-80, and glutamate 86; that span reads RHR. DUMP-binding positions include 75 to 78, 86 to 90, and arginine 148; these read QWMR and ELSGR. The short motif at 78–88 is the ThyX motif element; sequence RHRIASYNELS. Residues 164–166 and asparagine 170 each bind FAD; that span reads NAR. A dUMP-binding site is contributed by arginine 175. Catalysis depends on arginine 175, which acts as the Involved in ionization of N3 of dUMP, leading to its activation.

Belongs to the thymidylate synthase ThyX family. In terms of assembly, homotetramer. It depends on FAD as a cofactor.

The enzyme catalyses dUMP + (6R)-5,10-methylene-5,6,7,8-tetrahydrofolate + NADPH + H(+) = dTMP + (6S)-5,6,7,8-tetrahydrofolate + NADP(+). It functions in the pathway pyrimidine metabolism; dTTP biosynthesis. Catalyzes the reductive methylation of 2'-deoxyuridine-5'-monophosphate (dUMP) to 2'-deoxythymidine-5'-monophosphate (dTMP) while utilizing 5,10-methylenetetrahydrofolate (mTHF) as the methyl donor, and NADPH and FADH(2) as the reductant. This Pseudothermotoga lettingae (strain ATCC BAA-301 / DSM 14385 / NBRC 107922 / TMO) (Thermotoga lettingae) protein is Flavin-dependent thymidylate synthase.